A 108-amino-acid polypeptide reads, in one-letter code: E3 ubiquitin-protein ligase Midline-1 (108 aa).

Positions 1 to 100 constitute a B30.2/SPRY domain; the sequence is KSAPKHEWIG…IITGLPIPDH (100 aa).

The protein belongs to the TRIM/RBCC family. In terms of assembly, homodimer or heterodimer with MID2. Interacts with IGBP1.

Its subcellular location is the cytoplasm. It is found in the cytoskeleton. The enzyme catalyses S-ubiquitinyl-[E2 ubiquitin-conjugating enzyme]-L-cysteine + [acceptor protein]-L-lysine = [E2 ubiquitin-conjugating enzyme]-L-cysteine + N(6)-ubiquitinyl-[acceptor protein]-L-lysine.. Functionally, has E3 ubiquitin ligase activity towards IGBP1, promoting its monoubiquitination, which results in deprotection of the catalytic subunit of protein phosphatase PP2A, and its subsequent degradation by polyubiquitination. This Mus caroli (Ryukyu mouse) protein is E3 ubiquitin-protein ligase Midline-1 (Mid1).